The chain runs to 238 residues: MPTSLKHLKISPKEAHTATVIFLHGLGDSGHGWLPVAKMLWSSFPNVKWILPHAPTIPVSLNHGMAMPSWFDIRHLDKLDNSENDDEQGMLETLKSVDELIQAEVDSGIPENRIVLGGFSQGGAISVLNMLTTKRKLAGVVALSTWVPLNHKIVQMMSEHAKDIPVFWGHGTNDPVVDYRFGQRSVDFLVQKCGYKLLSQGTTFARPGIRFESYPGMPHSSCPQEIEDLKSWLMEALK.

Active-site charge relay system residues include S120, D174, and H219.

Belongs to the AB hydrolase superfamily. AB hydrolase 2 family.

It is found in the cytoplasm. The protein localises to the nucleus. It catalyses the reaction S-hexadecanoyl-L-cysteinyl-[protein] + H2O = L-cysteinyl-[protein] + hexadecanoate + H(+). Hydrolyzes fatty acids from S-acylated cysteine residues in proteins with a strong preference for palmitoylated G-alpha proteins over other acyl substrates. Mediates the deacylation of G-alpha proteins such as GPA1 in vivo, but has weak or no activity toward palmitoylated Ras proteins. Has weak lysophospholipase activity in vitro; however such activity may not exist in vivo. This chain is Acyl-protein thioesterase 1, found in Cryptococcus neoformans var. neoformans serotype D (strain B-3501A) (Filobasidiella neoformans).